A 497-amino-acid polypeptide reads, in one-letter code: Envelope glycoprotein E (497 aa).

Topologically, residues Met-1–Thr-398 are virion surface. 7 N-linked (GlcNAc...) asparagine; by host glycosylation sites follow: Asn-60, Asn-133, Asn-148, Asn-203, Asn-277, Asn-366, and Asn-388. The helical transmembrane segment at Ser-399–Ile-419 threads the bilayer. The Intravirion portion of the chain corresponds to Arg-420 to His-497.

It belongs to the alphaherpesvirinae glycoprotein E family. Interacts with gI. In terms of processing, phosphorylated within the acidic cluster. Phosphorylation determines whether endocytosed viral gE traffics to the trans-Golgi network or recycles to the cell membrane.

It is found in the virion membrane. It localises to the host cell membrane. Its subcellular location is the host cell junction. The protein localises to the host Golgi apparatus membrane. The protein resides in the host endosome membrane. Functionally, in epithelial cells, the heterodimer gE/gI is required for the cell-to-cell spread of the virus, by sorting nascent virions to cell junctions. Once the virus reaches the cell junctions, virus particles can spread to adjacent cells extremely rapidly through interactions with cellular receptors that accumulate at these junctions. Implicated in basolateral spread in polarized cells. In neuronal cells, gE/gI is essential for the anterograde spread of the infection throughout the host nervous system. Together with US9, the heterodimer gE/gI is involved in the sorting and transport of viral structural components toward axon tips. This is Envelope glycoprotein E (MDV096) from Gallus gallus (Chicken).